The primary structure comprises 328 residues: Phenylalanine--tRNA ligase alpha subunit (328 aa).

Residue glutamate 253 coordinates Mg(2+).

It belongs to the class-II aminoacyl-tRNA synthetase family. Phe-tRNA synthetase alpha subunit type 1 subfamily. In terms of assembly, tetramer of two alpha and two beta subunits. Requires Mg(2+) as cofactor.

The protein localises to the cytoplasm. It catalyses the reaction tRNA(Phe) + L-phenylalanine + ATP = L-phenylalanyl-tRNA(Phe) + AMP + diphosphate + H(+). The polypeptide is Phenylalanine--tRNA ligase alpha subunit (Chromobacterium violaceum (strain ATCC 12472 / DSM 30191 / JCM 1249 / CCUG 213 / NBRC 12614 / NCIMB 9131 / NCTC 9757 / MK)).